Here is a 45-residue protein sequence, read N- to C-terminus: YKRCHKKGGHCFPKTVICLPPSSDFGKMDCRWKWKCCKKGSVNNA.

Cystine bridges form between cysteine 4–cysteine 36, cysteine 11–cysteine 30, and cysteine 18–cysteine 37.

In terms of assembly, monomer. As to expression, expressed by the venom gland.

Its subcellular location is the secreted. Its function is as follows. Cationic peptide that possesses multiple functions. It acts as a cell-penetrating peptide (CPP), and as a potent voltage-gated potassium channel (Kv) inhibitor. It exhibits antimicrobial activities, hind limb paralysis, and severe muscle necrosis by a non-enzymatic mechanism. In Crotalus viridis viridis (Prairie rattlesnake), this protein is Myotoxin-3.